Here is a 170-residue protein sequence, read N- to C-terminus: dCTP pyrophosphatase 1 (170 aa).

A disordered region spans residues 1–25 (MSQAGTGVCGNGGQEDSAAAGPFSF). N-acetylserine is present on Ser2. Ser2 is subject to Phosphoserine. Substrate contacts are provided by residues His38 and 47-51 (WEQFH). Residues Glu63 and Glu66 each contribute to the Mg(2+) site. Trp73 contributes to the substrate binding site. 2 residues coordinate Mg(2+): Glu95 and Asp98. Tyr102 is a substrate binding site. The tract at residues 149–170 (LSENEAVGSGDPASELGNQAST) is disordered.

Homotetramer. Requires Mg(2+) as cofactor.

The protein resides in the cytoplasm. It localises to the cytosol. The enzyme catalyses dCTP + H2O = dCMP + diphosphate + H(+). Its function is as follows. Hydrolyzes deoxynucleoside triphosphates (dNTPs) to the corresponding nucleoside monophosphates. Has a strong preference for dCTP and its analogs including 5-iodo-dCTP and 5-methyl-dCTP for which it may even have a higher efficiency. May protect DNA or RNA against the incorporation of these genotoxic nucleotide analogs through their catabolism. The polypeptide is dCTP pyrophosphatase 1 (Rattus norvegicus (Rat)).